The chain runs to 434 residues: Methylenetetrahydrofolate--tRNA-(uracil-5-)-methyltransferase TrmFO (434 aa).

10 to 15 (GAGLAG) provides a ligand contact to FAD.

The protein belongs to the MnmG family. TrmFO subfamily. FAD is required as a cofactor.

The protein localises to the cytoplasm. The enzyme catalyses uridine(54) in tRNA + (6R)-5,10-methylene-5,6,7,8-tetrahydrofolate + NADH + H(+) = 5-methyluridine(54) in tRNA + (6S)-5,6,7,8-tetrahydrofolate + NAD(+). It catalyses the reaction uridine(54) in tRNA + (6R)-5,10-methylene-5,6,7,8-tetrahydrofolate + NADPH + H(+) = 5-methyluridine(54) in tRNA + (6S)-5,6,7,8-tetrahydrofolate + NADP(+). In terms of biological role, catalyzes the folate-dependent formation of 5-methyl-uridine at position 54 (M-5-U54) in all tRNAs. The polypeptide is Methylenetetrahydrofolate--tRNA-(uracil-5-)-methyltransferase TrmFO (Bacillus cereus (strain AH820)).